We begin with the raw amino-acid sequence, 177 residues long: MSRVAKNPVKLPAGVEVKFAGQQLSVKGAKGTLELNVHSSVEVVEEAGELRFAARNGDQQTRAMAGTTRALVNNMVQGVSQGFERKLQLVGVGYKAQAKGQVLNLALGFSHPVDYELPEGITAETPSQTDILIKGIDKQLVGQVAAEIRDFRPPEPYKGKGVRYADEVVRRKEAKKK.

Belongs to the universal ribosomal protein uL6 family. In terms of assembly, part of the 50S ribosomal subunit.

This protein binds to the 23S rRNA, and is important in its secondary structure. It is located near the subunit interface in the base of the L7/L12 stalk, and near the tRNA binding site of the peptidyltransferase center. This Pseudomonas fluorescens (strain Pf0-1) protein is Large ribosomal subunit protein uL6.